A 468-amino-acid chain; its full sequence is Zinc-regulated transporter 1 (468 aa).

Positions 1–17 (MKFTHLFFIGLLTKVYT) are cleaved as a signal peptide. At 18–185 (ETVTVLSTRS…VKRDYDIPLR (168 aa)) the chain is on the extracellular side. N-linked (GlcNAc...) asparagine glycosylation is found at Asn-57 and Asn-67. Residues 186–206 (IGLLFVILVTSGIGSFGPIVL) traverse the membrane as a helical segment. Residues 207 to 217 (KQFVNLSQENY) are Cytoplasmic-facing. The helical transmembrane segment at 218 to 238 (IIVIIKQFGTGIIISTAFVHL) threads the bilayer. At 239 to 257 (MTHAQLMWSNSCLKIKYEG) the chain is on the extracellular side. A helical membrane pass occupies residues 258–278 (TGASITMAGIFIAFIIEYIAL). Residues 279–314 (RIVNARDTGKVDKKEIEETSSNEQSLHGISVNDKIS) are Cytoplasmic-facing. Residues 315 to 335 (VMILEAGIIFHSILIGITLVV) form a helical membrane-spanning segment. Residues 336-338 (TDD) lie on the Extracellular side of the membrane. The helical transmembrane segment at 339–359 (VYFITLFIVIVFHQFFEGLAL) threads the bilayer. The Cytoplasmic segment spans residues 360-374 (SSRIISITNASLSTK). A helical transmembrane segment spans residues 375 to 395 (LVMALMFALITPIGMAIGIGV). The Extracellular portion of the chain corresponds to 396–406 (LNKFNGNDPST). The helical transmembrane segment at 407–427 (LIALGTLDSFSAGVLLWTGLI) threads the bilayer. The Cytoplasmic segment spans residues 428 to 447 (EMWSHDWLHGHLRNSSFVKT). A helical transmembrane segment spans residues 448–468 (TVALVSLILGMLLMSLLGNWA).

It belongs to the ZIP transporter (TC 2.A.5) family.

It localises to the cell membrane. It carries out the reaction Zn(2+)(in) = Zn(2+)(out). Zinc transporter that acts with PRA1 in sequestration of zinc from host tissues during infection. The pH-regulated antigen 1 (PRA1) binds zinc from its environment and then reassociates with ZRT1 to acquire this essential metal. The polypeptide is Zinc-regulated transporter 1 (ZRT101) (Candida albicans (strain SC5314 / ATCC MYA-2876) (Yeast)).